We begin with the raw amino-acid sequence, 88 residues long: MKTLLLTLVVVTIVCLDLGNSFSCYKTPYVKSEPCAPGENLCYTKSWCDRFCSIRGKVIELGCAATCPPAEPKKDITCCSTDNCNTHP.

The signal sequence occupies residues 1–21; that stretch reads MKTLLLTLVVVTIVCLDLGNS. Disulfide bonds link Cys24–Cys42, Cys35–Cys63, Cys48–Cys52, Cys67–Cys78, and Cys79–Cys84.

Belongs to the three-finger toxin family. Long-chain subfamily. Type II alpha-neurotoxin sub-subfamily. As to expression, expressed by the venom gland.

The protein localises to the secreted. Its function is as follows. Binds with high affinity to muscular (alpha-1/CHRNA1) and neuronal (alpha-7/CHRNA7) nicotinic acetylcholine receptor (nAChR) and inhibits acetylcholine from binding to the receptor, thereby impairing neuromuscular and neuronal transmission. The sequence is that of Long neurotoxin 20 from Drysdalia coronoides (White-lipped snake).